The chain runs to 424 residues: Tyrosine--tRNA ligase (424 aa).

Position 37 (Tyr37) interacts with L-tyrosine. Residues 42–51 carry the 'HIGH' region motif; the sequence is PTADSLHLGH. An N6-acetyllysine modification is found at Lys144. Tyr175 and Gln179 together coordinate L-tyrosine. The 'KMSKS' region signature appears at 235 to 239; sequence KFGKT. Lys238 contributes to the ATP binding site. The 58-residue stretch at 357-414 folds into the S4 RNA-binding domain; it reads ADLMQALVDSELQPSRGQARKTIASNAITINGEKQSDPEYFFKEEDRLFGRFTLLRRG.

It belongs to the class-I aminoacyl-tRNA synthetase family. TyrS type 1 subfamily. As to quaternary structure, homodimer.

The protein localises to the cytoplasm. It carries out the reaction tRNA(Tyr) + L-tyrosine + ATP = L-tyrosyl-tRNA(Tyr) + AMP + diphosphate + H(+). Functionally, catalyzes the attachment of tyrosine to tRNA(Tyr) in a two-step reaction: tyrosine is first activated by ATP to form Tyr-AMP and then transferred to the acceptor end of tRNA(Tyr). This is Tyrosine--tRNA ligase from Escherichia coli (strain K12 / DH10B).